We begin with the raw amino-acid sequence, 1531 residues long: Myosin-17 (1531 aa).

Residues Ile-8–Thr-57 enclose the Myosin N-terminal SH3-like domain. Positions Gly-62–Ala-732 constitute a Myosin motor domain. ATP is bound by residues Gly-156–Thr-163 and Asn-209–Lys-217. Actin-binding stretches follow at residues Leu-495–Phe-529, Asn-531–Val-554, Phe-589–Leu-613, and Leu-613–Asn-635. IQ domains are found at residues Leu-758–Ala-787, Arg-783–Thr-812, Ile-806–Ala-835, Gln-831–Ser-860, and Leu-854–Asp-883. The stretch at Thr-884–Ser-1056 forms a coiled coil. The interval Leu-1071 to Asp-1090 is disordered. Residues Glu-1076–Asp-1090 are compositionally biased toward polar residues. The 312-residue stretch at Asp-1159–Glu-1470 folds into the Dilute domain. Ser-1517 carries the post-translational modification Phosphoserine.

The protein belongs to the TRAFAC class myosin-kinesin ATPase superfamily. Myosin family. Plant myosin class XI subfamily. Homodimer. Interacts with MYOB1, MYOB2 and MYOB3. Interacts with PHOX1 and PHOX2. Expressed ubiquitously.

It localises to the cytoplasm. Its function is as follows. Myosin heavy chain that is required for the cell cycle-regulated transport of various organelles and proteins for their segregation. Functions by binding with its tail domain to receptor proteins on organelles and exerting force with its N-terminal motor domain against actin filaments, thereby transporting its cargo along polarized actin cables. Involved in the tip growth of root hair cells and in the elongation of trichome stalk and branches. Plays a major role in trafficking of Golgi stacks, mitochondria and peroxisomes during root hair development. Acts as the primary contributor to ER streaming with a major role in the movement of Golgi bodies. Required for development of pavement cells, trichomes, and stigmatic papillae. Together with XI-F, required for the regulation of organ bending, such as gravitropic root bending. The sequence is that of Myosin-17 from Arabidopsis thaliana (Mouse-ear cress).